Consider the following 632-residue polypeptide: 2-hydroxyacyl-CoA lyase 2 (632 aa).

The chain crosses the membrane as a helical span at residues 10-30 (AWGFFSSFLLLAFGTLVAALL). Glu-98 is a binding site for thiamine diphosphate. The thiamine pyrophosphate binding stretch occupies residues 470 to 550 (DFVGTAAYLV…VMALIGNDAG (81 aa)). 2 residues coordinate Mg(2+): Asp-521 and Asn-547.

Belongs to the TPP enzyme family. Requires Mg(2+) as cofactor. Thiamine diphosphate is required as a cofactor.

It is found in the endoplasmic reticulum membrane. The enzyme catalyses 2-hydroxyoctadecanoyl-CoA = heptadecanal + formyl-CoA. It carries out the reaction (2R)-hydroxyhexadecanoyl-CoA = pentadecanal + formyl-CoA. Functionally, endoplasmic reticulum 2-OH acyl-CoA lyase involved in the cleavage (C1 removal) reaction in the fatty acid alpha-oxydation in a thiamine pyrophosphate (TPP)-dependent manner. Involved in the phytosphingosine degradation pathway. The polypeptide is 2-hydroxyacyl-CoA lyase 2 (ILVBL) (Bos taurus (Bovine)).